The primary structure comprises 641 residues: Tegument protein UL35 (641 aa).

Disordered stretches follow at residues 353–373 (ERGE…PREA), 500–572 (ASSS…PRQR), and 587–641 (AYSH…LRHL). The segment covering 358 to 367 (GDEDEEQEND) has biased composition (acidic residues). Over residues 500–563 (ASSSSASSSS…LSGSHGISSA (64 aa)) the composition is skewed to low complexity. The span at 589–599 (SHHRRHRRRRS) shows a compositional bias: basic residues. Basic and acidic residues predominate over residues 632-641 (DDLAENLRHL).

This sequence belongs to the herpesviridae pp85 family. In terms of assembly, interacts with UL82. Interacts with isoform UL35A. Interacts with host UBP7; this interaction significantly inhibits the ability of USP7 to form nuclear bodies. Interacts with host DCAF1 (via C-terminus). Interacts with host SNX5; this interaction allows proper gB localization during viral assembly. Interacts with host TBK1; this interaction prevents type I interferon production. Interacts with UL82. Interacts with isoform UL35. Interacts with host UBP7; this interaction significantly inhibits the ability of USP7 to form nuclear bodies. Interacts with host SNX5; this interaction allows proper gB localization during viral assembly.

It is found in the virion tegument. The protein localises to the host nucleus. It localises to the host cytoplasm. Its function is as follows. Plays important role in immediate-early gene expression through interaction with UL82. Forms nuclear bodies in host nucleus, independently of PML. In turn, UL35 nuclear bodies associate with and remodel PML bodies. Through interaction with host DCAF1, causes cells to accumulate in the G2 phase of the cell cycle by inducing a DNA damage response. Regulates viral assembly by controlling the localization of the essential gB through regulation of a retrograde transport pathway. This modulation occurs via binding and inhibition of host sorting nexin 5/SNX5. Also plays a role in the inhibition of pattern recognition receptor-mediated type I interferon signaling at the level of TBK1. In terms of biological role, promotes cytoplasmic UL82 accumulation and inhibits UL35-containing nuclear bodies formation. Regulates viral assembly by controlling the localization of the essential gB through regulation of a retrograde transport pathway. This modulation occurs via binding and inhibition of host sorting nexin 5/SNX5. This is Tegument protein UL35 (UL35) from Homo sapiens (Human).